Here is a 157-residue protein sequence, read N- to C-terminus: Thioredoxin 2 (157 aa).

An N-terminal signal peptide occupies residues 1–23; it reads MKKYIFFFLFSFINFFFVYDVTC. A Thioredoxin domain is found at 46–157; the sequence is LRMFKKVPRL…DLIALIKKHL (112 aa). Catalysis depends on nucleophile residues Cys82 and Cys85. Cys82 and Cys85 are disulfide-bonded.

This sequence belongs to the thioredoxin family. Monomer. Component of the Plasmodium translocon of exported proteins (PTEX) complex composed of HSP101, EXP2, PTEX150, PTEX88 and TRX2. Post-translationally, the disulfide bond between Cys-82 and Cys-85 acts as a redox-active center and is reduced by thioredoxin reductase TRXR.

The protein localises to the parasitophorous vacuole membrane. In terms of biological role, participates in various redox reactions through the reversible oxidation of its active center dithiol to a disulfide and catalyzes dithiol-disulfide exchange reactions. As part of the translocon PTEX complex, plays a role in the export of parasite proteins into the host erythrocyte. The translocon PTEX complex is a multi-protein machinery resident in the parasite parasitophorous vacuolar membrane, responsible for protein secretion into host cells. May contribute to the unfolding of proteins containing the PEXEL localization motif before their passage through the translocon or regulate the PTEX complex function. The polypeptide is Thioredoxin 2 (Plasmodium falciparum (isolate 3D7)).